Here is a 624-residue protein sequence, read N- to C-terminus: Chaperone protein HtpG (624 aa).

Residues 1 to 336 are a; substrate-binding; the sequence is MKGQETRGFQ…SNDLPLNVSR (336 aa). The interval 337 to 552 is b; it reads EILQDSTVTR…ADEMSTQMAK (216 aa). Residues 553–624 form a c region; sequence LFAAAGQSVP…IRRMNQLLVS (72 aa).

The protein belongs to the heat shock protein 90 family. In terms of assembly, homodimer.

Its subcellular location is the cytoplasm. Molecular chaperone. Has ATPase activity. This is Chaperone protein HtpG from Salmonella paratyphi A (strain ATCC 9150 / SARB42).